The chain runs to 606 residues: Retrovirus-related Pol polyprotein from type-1 retrotransposable element R2 (606 aa).

The region spanning 1–208 (GTLANIIMLE…NTFKYLGLTF (208 aa)) is the Reverse transcriptase domain. A nucleic acid-binding endonuclease region spans residues 331–606 (IFNIEGPARS…PPDPPRPVPP (276 aa)).

It carries out the reaction DNA(n) + a 2'-deoxyribonucleoside 5'-triphosphate = DNA(n+1) + diphosphate. This chain is Retrovirus-related Pol polyprotein from type-1 retrotransposable element R2, found in Popillia japonica (Japanese beetle).